Here is a 79-residue protein sequence, read N- to C-terminus: Sec-independent protein translocase protein TatA (79 aa).

A helical transmembrane segment spans residues 1–21; it reads MGGISIWQLLIILVIVVLLFG. Positions 45–79 are disordered; it reads EEEKDADFEQKKQVEEKSAAEPVSTETQSDVKEKS. Residues 51 to 63 show a composition bias toward basic and acidic residues; sequence DFEQKKQVEEKSA.

This sequence belongs to the TatA/E family. The Tat system comprises two distinct complexes: a TatABC complex, containing multiple copies of TatA, TatB and TatC subunits, and a separate TatA complex, containing only TatA subunits. Substrates initially bind to the TatABC complex, which probably triggers association of the separate TatA complex to form the active translocon.

It localises to the cell inner membrane. Functionally, part of the twin-arginine translocation (Tat) system that transports large folded proteins containing a characteristic twin-arginine motif in their signal peptide across membranes. TatA could form the protein-conducting channel of the Tat system. This chain is Sec-independent protein translocase protein TatA, found in Alteromonas mediterranea (strain DSM 17117 / CIP 110805 / LMG 28347 / Deep ecotype).